Consider the following 213-residue polypeptide: Isomeliandiol synthase MOI2 (213 aa).

5 consecutive transmembrane segments (helical) span residues 18 to 38 (AALHAWNGLSLFLIVFISWFI), 52 to 72 (VLCWWALTGLIHVFQEGYYVF), 109 to 129 (IESMASVVLGPLSLLAAYALA), 137 to 157 (ILQFGVSIAQLYGACLYFLSA), and 171 to 191 (YWAYYVGQSSIWVIVPALIAI). The EXPERA domain maps to 48–190 (MDRVVLCWWA…IWVIVPALIA (143 aa)).

This sequence belongs to the EBP family. In terms of tissue distribution, mainly expressed in petioles.

The protein localises to the membrane. It carries out the reaction 7,8-epoxymelianol = isomeliandiol. It participates in secondary metabolite biosynthesis; terpenoid biosynthesis. Isomerase involved in the biosynthesis of limonoids triterpene natural products such as azadirachtin, an antifeedant widely used as bioinsecticide, and possessing many medicinal applications including anti-tumoral, anti-malarial, anti-rheumatic, antibacterial, anti-inflammatory, anti-pyretic and diuretic effects. Catalyzes the conversion of 7,8-epoxymelianol to isomeliandiol via skeletal rearrangements. This chain is Isomeliandiol synthase MOI2, found in Melia azedarach (Chinaberry tree).